A 1184-amino-acid polypeptide reads, in one-letter code: Protein stu1 (1184 aa).

HEAT repeat units follow at residues Phe92–Val130 and Arg162–Ala194. Composition is skewed to basic and acidic residues over residues Ser229–Pro240 and Glu308–Thr317. The disordered stretch occupies residues Ser229 to Ser336. The HEAT 3 repeat unit spans residues Val463–Gln499. 2 disordered regions span residues Leu564 to Leu584 and Ala602 to Glu906. The segment covering Asn572–Leu584 has biased composition (polar residues). Low complexity predominate over residues Ala640–Pro649. The span at Ser723–Ala737 shows a compositional bias: polar residues. Composition is skewed to basic and acidic residues over residues Ala787–Leu811 and Glu882–Glu895.

Belongs to the CLASP family. Interacts with microtubules.

Its subcellular location is the cytoplasm. The protein localises to the cytoskeleton. It localises to the nucleus. It is found in the spindle. Microtubule binding protein that promotes the stabilization of dynamic microtubules. Required for mitotic spindle formation. The sequence is that of Protein stu1 (stu1) from Aspergillus oryzae (strain ATCC 42149 / RIB 40) (Yellow koji mold).